We begin with the raw amino-acid sequence, 233 residues long: 2-C-methyl-D-erythritol 4-phosphate cytidylyltransferase (233 aa).

The protein belongs to the IspD/TarI cytidylyltransferase family. IspD subfamily.

It carries out the reaction 2-C-methyl-D-erythritol 4-phosphate + CTP + H(+) = 4-CDP-2-C-methyl-D-erythritol + diphosphate. The protein operates within isoprenoid biosynthesis; isopentenyl diphosphate biosynthesis via DXP pathway; isopentenyl diphosphate from 1-deoxy-D-xylulose 5-phosphate: step 2/6. Its function is as follows. Catalyzes the formation of 4-diphosphocytidyl-2-C-methyl-D-erythritol from CTP and 2-C-methyl-D-erythritol 4-phosphate (MEP). The protein is 2-C-methyl-D-erythritol 4-phosphate cytidylyltransferase of Lachnoclostridium phytofermentans (strain ATCC 700394 / DSM 18823 / ISDg) (Clostridium phytofermentans).